Consider the following 348-residue polypeptide: Sex-lethal homolog (348 aa).

RRM domains are found at residues threonine 110–proline 188 and threonine 196–glutamate 276. Positions glycine 296–glycine 310 are enriched in gly residues. The segment at glycine 296–methionine 317 is disordered.

It is found in the nucleus. Its function is as follows. Unknown; apparently not involved in somatic sex determination. The protein is Sex-lethal homolog (SXL) of Ceratitis capitata (Mediterranean fruit fly).